The sequence spans 334 residues: Serine racemase (334 aa).

Glu13 provides a ligand contact to Mg(2+). Positions 31, 32, 33, 51, and 52 each coordinate ATP. Catalysis depends on proton acceptor residues Lys56 and Ser84. At Lys56 the chain carries N6-(pyridoxal phosphate)lysine. Asn86 serves as a coordination point for pyridoxal 5'-phosphate. ATP is bound at residue Gln89. Cys113 carries the S-nitrosocysteine modification. Tyr121 contacts ATP. Residue Asn154 coordinates pyridoxal 5'-phosphate. Position 178 (Asp178) interacts with Mg(2+). Gly185, Gly186, Gly187, Gly188, and Met189 together coordinate pyridoxal 5'-phosphate. Positions 210, 214, 216, and 247 each coordinate Mg(2+). Residues Glu210, Ala214, Asp216, and Asn247 each coordinate Ca(2+). Residues Glu210, Ala214, and Asp216 each coordinate Mn(2+). Lys279 contributes to the ATP binding site. Ser313 contacts pyridoxal 5'-phosphate. Asn316 is a binding site for ATP.

Belongs to the serine/threonine dehydratase family. As to quaternary structure, homodimer. Mg(2+) serves as cofactor. It depends on Mn(2+) as a cofactor. Ca(2+) is required as a cofactor. Requires pyridoxal 5'-phosphate as cofactor. S-nitrosylated, leading to decrease the enzyme activity.

The catalysed reaction is L-serine = D-serine. It carries out the reaction L-serine = pyruvate + NH4(+). It catalyses the reaction D-serine = pyruvate + NH4(+). Functionally, catalyzes the synthesis of D-serine from L-serine. D-serine is a key coagonist with glutamate at NMDA receptors. Has dehydratase activity towards both L-serine and D-serine. The sequence is that of Serine racemase (SRR) from Bos taurus (Bovine).